The following is a 546-amino-acid chain: Phosphomethylpyrimidine synthase (546 aa).

Residues N145, M174, Y203, H239, 259 to 261 (SRG), 300 to 303 (DGLR), and E339 contribute to the substrate site. H343 contributes to the Zn(2+) binding site. Residue Y366 coordinates substrate. Zn(2+) is bound at residue H407. Positions 487, 490, and 495 each coordinate [4Fe-4S] cluster.

The protein belongs to the ThiC family. [4Fe-4S] cluster serves as cofactor.

The enzyme catalyses 5-amino-1-(5-phospho-beta-D-ribosyl)imidazole + S-adenosyl-L-methionine = 4-amino-2-methyl-5-(phosphooxymethyl)pyrimidine + CO + 5'-deoxyadenosine + formate + L-methionine + 3 H(+). The protein operates within cofactor biosynthesis; thiamine diphosphate biosynthesis. Catalyzes the synthesis of the hydroxymethylpyrimidine phosphate (HMP-P) moiety of thiamine from aminoimidazole ribotide (AIR) in a radical S-adenosyl-L-methionine (SAM)-dependent reaction. The polypeptide is Phosphomethylpyrimidine synthase (Mycobacterium ulcerans (strain Agy99)).